Consider the following 1074-residue polypeptide: Phospholipase D1 (1074 aa).

The region spanning 81 to 212 (VKAQVLEVER…TEFLDVSQLS (132 aa)) is the PX domain. Residues 219–328 (PKGLEGMIMK…WGGAIEEFIQ (110 aa)) form the PH domain. S-palmitoyl cysteine attachment occurs at residues C240 and C241. A PLD phosphodiesterase 1 domain is found at 459–486 (YLWAHHEKLVIIDQSVAFVGGIDLAYGR). The tract at residues 463–928 (HHEKLVIIDQ…MLGKRDSEMA (466 aa)) is catalytic. Phosphoserine occurs at positions 499, 561, and 629. In terms of domain architecture, PLD phosphodiesterase 2 spans 891–918 (ELIYVHSKLLIADDNTVIIGSANINDRS).

The protein belongs to the phospholipase D family. Interacts with PIP5K1B. In terms of processing, phosphorylated on serine and threonine residues. It is uncertain whether palmitoylation is on Cys-240 and/or Cys-241. Palmitoylation is required prior to phosphorylation.

The protein resides in the cytoplasm. It localises to the perinuclear region. The protein localises to the endoplasmic reticulum membrane. Its subcellular location is the golgi apparatus membrane. It is found in the late endosome membrane. The enzyme catalyses a 1,2-diacyl-sn-glycero-3-phosphocholine + H2O = a 1,2-diacyl-sn-glycero-3-phosphate + choline + H(+). It carries out the reaction ethanol + a 1,2-diacyl-sn-glycero-3-phosphocholine = 1,2-diacyl-sn-glycero-3-phosphoethanol + choline. It catalyses the reaction 1,2-dihexadecanoyl-sn-glycero-3-phosphocholine + H2O = 1,2-dihexadecanoyl-sn-glycero-3-phosphate + choline + H(+). With respect to regulation, stimulated by phosphatidylinositol 4,5-bisphosphate and phosphatidylinositol 3,4,5-trisphosphate, activated by the phosphokinase C-alpha, by the ADP-ribosylation factor-1 (ARF-1), and to a lesser extent by GTP-binding proteins: RHO A, RAC-1 and CDC42. Inhibited by oleate. Its function is as follows. Function as phospholipase selective for phosphatidylcholine. Implicated as a critical step in numerous cellular pathways, including signal transduction, membrane trafficking, and the regulation of mitosis. May be involved in the regulation of perinuclear intravesicular membrane traffic. This is Phospholipase D1 from Rattus norvegicus (Rat).